The chain runs to 184 residues: MAISRVWRNRLSFMAIMILVAMVLSLMSYALLWKAGNLTDVPNLRIGFYNFCLWKEDIGSLECYNFPELGVLGIPQVGLALARLGVYGALVLAVFVPLPLLLAQCNSDEGEWRLAVGFLGASSVLLAGGLSLFLFLVWKWLRLSFLGPGFLSLCLAQALLIILLMAMVMFPPRDKKDKNHWENC.

Topologically, residues 1–12 (MAISRVWRNRLS) are cytoplasmic. A helical transmembrane segment spans residues 13-33 (FMAIMILVAMVLSLMSYALLW). Topologically, residues 34-83 (KAGNLTDVPNLRIGFYNFCLWKEDIGSLECYNFPELGVLGIPQVGLALAR) are extracellular. Residue N37 is glycosylated (N-linked (GlcNAc...) asparagine). A helical membrane pass occupies residues 84–104 (LGVYGALVLAVFVPLPLLLAQ). At 105–117 (CNSDEGEWRLAVG) the chain is on the cytoplasmic side. Residues 118 to 138 (FLGASSVLLAGGLSLFLFLVW) traverse the membrane as a helical segment. The Extracellular segment spans residues 139 to 149 (KWLRLSFLGPG). A helical membrane pass occupies residues 150 to 170 (FLSLCLAQALLIILLMAMVMF). Over 171–184 (PPRDKKDKNHWENC) the chain is Cytoplasmic.

The protein localises to the membrane. The protein is Transmembrane protein 140 (Tmem140) of Rattus norvegicus (Rat).